The sequence spans 291 residues: Methionine aminopeptidase (291 aa).

Histidine 118 contributes to the substrate binding site. Positions 135, 146, and 209 each coordinate a divalent metal cation. Histidine 216 serves as a coordination point for substrate. A divalent metal cation is bound by residues glutamate 241 and glutamate 273.

It belongs to the peptidase M24A family. Methionine aminopeptidase type 1 subfamily. In terms of assembly, monomer. It depends on Co(2+) as a cofactor. Zn(2+) is required as a cofactor. The cofactor is Mn(2+). Requires Fe(2+) as cofactor.

The enzyme catalyses Release of N-terminal amino acids, preferentially methionine, from peptides and arylamides.. Removes the N-terminal methionine from nascent proteins. The N-terminal methionine is often cleaved when the second residue in the primary sequence is small and uncharged (Met-Ala-, Cys, Gly, Pro, Ser, Thr, or Val). Requires deformylation of the N(alpha)-formylated initiator methionine before it can be hydrolyzed. The protein is Methionine aminopeptidase of Chlamydia pneumoniae (Chlamydophila pneumoniae).